Reading from the N-terminus, the 553-residue chain is Dihydroxy-acid dehydratase (553 aa).

Cysteine 49 serves as a coordination point for [2Fe-2S] cluster. Aspartate 81 contributes to the Mg(2+) binding site. Residue cysteine 122 coordinates [2Fe-2S] cluster. Aspartate 123 and lysine 124 together coordinate Mg(2+). Residue lysine 124 is modified to N6-carboxylysine. [2Fe-2S] cluster is bound at residue cysteine 194. Glutamate 444 contributes to the Mg(2+) binding site. The active-site Proton acceptor is serine 470.

Belongs to the IlvD/Edd family. As to quaternary structure, homodimer. [2Fe-2S] cluster serves as cofactor. The cofactor is Mg(2+).

The enzyme catalyses (2R)-2,3-dihydroxy-3-methylbutanoate = 3-methyl-2-oxobutanoate + H2O. It catalyses the reaction (2R,3R)-2,3-dihydroxy-3-methylpentanoate = (S)-3-methyl-2-oxopentanoate + H2O. It participates in amino-acid biosynthesis; L-isoleucine biosynthesis; L-isoleucine from 2-oxobutanoate: step 3/4. It functions in the pathway amino-acid biosynthesis; L-valine biosynthesis; L-valine from pyruvate: step 3/4. Its function is as follows. Functions in the biosynthesis of branched-chain amino acids. Catalyzes the dehydration of (2R,3R)-2,3-dihydroxy-3-methylpentanoate (2,3-dihydroxy-3-methylvalerate) into 2-oxo-3-methylpentanoate (2-oxo-3-methylvalerate) and of (2R)-2,3-dihydroxy-3-methylbutanoate (2,3-dihydroxyisovalerate) into 2-oxo-3-methylbutanoate (2-oxoisovalerate), the penultimate precursor to L-isoleucine and L-valine, respectively. The protein is Dihydroxy-acid dehydratase of Aeropyrum pernix (strain ATCC 700893 / DSM 11879 / JCM 9820 / NBRC 100138 / K1).